The following is a 521-amino-acid chain: Histidine--tRNA ligase (521 aa).

Residues 137–139 (DLT), arginine 164, glutamine 180, aspartate 184, arginine 338, and 342–343 (YY) contribute to the L-histidine site.

It belongs to the class-II aminoacyl-tRNA synthetase family.

It catalyses the reaction tRNA(His) + L-histidine + ATP = L-histidyl-tRNA(His) + AMP + diphosphate + H(+). Its function is as follows. Involved in protein synthesis. Catalyzes the specific attachment of an amino acid to its cognate tRNA in a 2 step reaction: the amino acid (AA) is first activated by ATP to form AA-AMP and then transferred to the acceptor end of the tRNA. Required for germ cell development. In Caenorhabditis elegans, this protein is Histidine--tRNA ligase.